A 29-amino-acid polypeptide reads, in one-letter code: Cyclotide psyleio B (29 aa).

Residues 1–29 (GDLPICGETCFGGTCNTPGCVCAWPVCNR) constitute a cross-link (cyclopeptide (Gly-Arg)). 3 disulfides stabilise this stretch: Cys6/Cys20, Cys10/Cys22, and Cys15/Cys27.

In terms of processing, this is a cyclic peptide.

Probably participates in a plant defense mechanism. The sequence is that of Cyclotide psyleio B from Psychotria brachyceras.